Reading from the N-terminus, the 172-residue chain is MKLGIVIFPSKMIQDKANGLRKRYDPHYALVPPHITLKAPFEAPEEQLETIVKELRTIANKTNPFTLHVGKVGSFAPVNNVIYFKVEKTPELTFLNEEMHKGFLTQEREYAFVPHLTIAQKLSDAEHADILGRLRMKDFYYEQTIDRFHLLYQLENETWNVHETFHLGKGSK.

H34 functions as the Proton donor in the catalytic mechanism. 2 short sequence motifs (HXTX) span residues 34 to 37 (HITL) and 115 to 118 (HLTI). The active-site Proton acceptor is H115.

This sequence belongs to the 2H phosphoesterase superfamily. YjcG family.

This chain is Putative phosphoesterase Bcer98_0945, found in Bacillus cytotoxicus (strain DSM 22905 / CIP 110041 / 391-98 / NVH 391-98).